The primary structure comprises 152 residues: Ribonuclease pancreatic beta-type (152 aa).

An N-terminal signal peptide occupies residues 1–25 (MGLXKSFALFSLLVLVLGWVQPSLS). The segment at 25-53 (SGESRESSADKFKRQHMDPDSPSKSSPTY) is disordered. Basic and acidic residues predominate over residues 27 to 45 (ESRESSADKFKRQHMDPDS). The substrate site is built by Lys35 and Arg38. His40 acts as the Proton acceptor in catalysis. Disulfide bonds link Cys54/Cys112, Cys68/Cys123, Cys86/Cys138, and Cys93/Cys100. Substrate is bound by residues 69–73 (KRVNT) and Lys94. The active-site Proton donor is the His147.

Belongs to the pancreatic ribonuclease family. Monomer.

Its subcellular location is the secreted. The catalysed reaction is an [RNA] containing cytidine + H2O = an [RNA]-3'-cytidine-3'-phosphate + a 5'-hydroxy-ribonucleotide-3'-[RNA].. It catalyses the reaction an [RNA] containing uridine + H2O = an [RNA]-3'-uridine-3'-phosphate + a 5'-hydroxy-ribonucleotide-3'-[RNA].. Its function is as follows. Endonuclease that catalyzes the cleavage of RNA on the 3' side of pyrimidine nucleotides. Acts on single-stranded and double-stranded RNA. The protein is Ribonuclease pancreatic beta-type of Rattus tiomanicus (Malayan field rat).